The following is a 233-amino-acid chain: RNA-free ribonuclease P (233 aa).

This sequence belongs to the HARP family.

The catalysed reaction is Endonucleolytic cleavage of RNA, removing 5'-extranucleotides from tRNA precursor.. RNA-free RNase P that catalyzes the removal of the 5'-leader sequence from pre-tRNA to produce the mature 5'-terminus. The sequence is that of RNA-free ribonuclease P from Methanocaldococcus jannaschii (strain ATCC 43067 / DSM 2661 / JAL-1 / JCM 10045 / NBRC 100440) (Methanococcus jannaschii).